The primary structure comprises 467 residues: MPTMRNSIFSEKIYPILLSAYRWYLRTPERSLEEAYKAALNIKAIEDEHFNGNKIDFNSAIYSNSVMDYFESDLAQELKTARMRLTEFRFSRWFSNESHQKAARKAGIEYPSSNVTLEKLKFIDEVISKYIITDYEIVAPSGVSESQVRTTSSQPPENPSLTDALRTNDINKNNLVERIYTPTSPPQLIKQRTEQSKKSRGKADTTGILPRSILSTIGRLQIELDPNAEQDVINNFRQAQKRSIISIRFILLIIIVPLLTHQLSKALIVSPIFNHFKNDHTEQIFLNSEMEEEALSTLHRFEERIKFENLISNAPPLSAEAIETQIKEKAEELAAEFRGESSNAIKNVFADIFSVGAFIWLLLVSKPSIMVLKEFFDNVVYGLSDSAKAFIIILFTDVFVGFHSPHGWEVILEGLSRHWGLPANRDFIFLFIATFPVILDTIFKYWIFRYLNRISPSAVATYRNMNE.

A compositionally biased stretch (polar residues) spans 146 to 161 (SQVRTTSSQPPENPSL). Disordered stretches follow at residues 146–167 (SQVR…ALRT) and 186–205 (PQLI…KADT). Over residues 191–203 (QRTEQSKKSRGKA) the composition is skewed to basic and acidic residues. Transmembrane regions (helical) follow at residues 249-269 (FILL…ALIV), 352-372 (IFSV…IMVL), 391-411 (IIIL…WEVI), and 427-447 (FIFL…KYWI).

The protein belongs to the CemA family.

It is found in the cell inner membrane. Required for H(+) efflux immediately after light irradiation to form a rapid H(+) concentration gradient across the thylakoid membranes. Together with PxcL, contributes to transient H(+) uptake following dark to light transition. The chain is Proton extrusion protein PxcA from Nostoc sp. (strain PCC 7120 / SAG 25.82 / UTEX 2576).